We begin with the raw amino-acid sequence, 74 residues long: Exodeoxyribonuclease 7 small subunit (74 aa).

This sequence belongs to the XseB family. Heterooligomer composed of large and small subunits.

The protein localises to the cytoplasm. It catalyses the reaction Exonucleolytic cleavage in either 5'- to 3'- or 3'- to 5'-direction to yield nucleoside 5'-phosphates.. Its function is as follows. Bidirectionally degrades single-stranded DNA into large acid-insoluble oligonucleotides, which are then degraded further into small acid-soluble oligonucleotides. This chain is Exodeoxyribonuclease 7 small subunit, found in Clostridium beijerinckii (strain ATCC 51743 / NCIMB 8052) (Clostridium acetobutylicum).